A 386-amino-acid polypeptide reads, in one-letter code: 8-amino-7-oxononanoate synthase (386 aa).

Position 19 (Arg19) interacts with substrate. 106 to 107 (GY) provides a ligand contact to pyridoxal 5'-phosphate. His131 provides a ligand contact to substrate. Positions 177, 205, and 233 each coordinate pyridoxal 5'-phosphate. Lys236 carries the post-translational modification N6-(pyridoxal phosphate)lysine. Thr350 is a substrate binding site.

This sequence belongs to the class-II pyridoxal-phosphate-dependent aminotransferase family. BioF subfamily. In terms of assembly, homodimer. Pyridoxal 5'-phosphate serves as cofactor.

It catalyses the reaction 6-carboxyhexanoyl-[ACP] + L-alanine + H(+) = (8S)-8-amino-7-oxononanoate + holo-[ACP] + CO2. Its pathway is cofactor biosynthesis; biotin biosynthesis. Catalyzes the decarboxylative condensation of pimeloyl-[acyl-carrier protein] and L-alanine to produce 8-amino-7-oxononanoate (AON), [acyl-carrier protein], and carbon dioxide. The protein is 8-amino-7-oxononanoate synthase of Alcanivorax borkumensis (strain ATCC 700651 / DSM 11573 / NCIMB 13689 / SK2).